The sequence spans 206 residues: dCTP deaminase, dUMP-forming (206 aa).

Residues 117-122 (RSSFGR), Asp135, 143-145 (TLE), Gln163, Tyr177, Lys184, and Gln188 contribute to the dCTP site. Glu145 functions as the Proton donor/acceptor in the catalytic mechanism.

The protein belongs to the dCTP deaminase family. As to quaternary structure, homotrimer.

It catalyses the reaction dCTP + 2 H2O = dUMP + NH4(+) + diphosphate. It functions in the pathway pyrimidine metabolism; dUMP biosynthesis; dUMP from dCTP: step 1/1. Functionally, bifunctional enzyme that catalyzes both the deamination of dCTP to dUTP and the hydrolysis of dUTP to dUMP without releasing the toxic dUTP intermediate. The sequence is that of dCTP deaminase, dUMP-forming from Methanococcus maripaludis (strain C5 / ATCC BAA-1333).